We begin with the raw amino-acid sequence, 361 residues long: Ribosomal RNA large subunit methyltransferase M (361 aa).

Residues serine 187, 220–223, aspartate 239, aspartate 259, and aspartate 276 each bind S-adenosyl-L-methionine; that span reads CPGG. The active-site Proton acceptor is lysine 305.

This sequence belongs to the class I-like SAM-binding methyltransferase superfamily. RNA methyltransferase RlmE family. RlmM subfamily. As to quaternary structure, monomer.

The protein resides in the cytoplasm. The catalysed reaction is cytidine(2498) in 23S rRNA + S-adenosyl-L-methionine = 2'-O-methylcytidine(2498) in 23S rRNA + S-adenosyl-L-homocysteine + H(+). In terms of biological role, catalyzes the 2'-O-methylation at nucleotide C2498 in 23S rRNA. This chain is Ribosomal RNA large subunit methyltransferase M, found in Shewanella sp. (strain MR-4).